Reading from the N-terminus, the 487-residue chain is UDP-N-acetylmuramoyl-L-alanyl-D-glutamate--2,6-diaminopimelate ligase (487 aa).

UDP-N-acetyl-alpha-D-muramoyl-L-alanyl-D-glutamate contacts are provided by Leu23 and Ser25. Position 108-114 (108-114 (GTNGKTS)) interacts with ATP. Residues 150-151 (TT), Ser177, Gln183, and Arg185 contribute to the UDP-N-acetyl-alpha-D-muramoyl-L-alanyl-D-glutamate site. N6-carboxylysine is present on Lys217. Residues Arg378, 402–405 (DNPR), Gly453, and Glu457 each bind meso-2,6-diaminopimelate. A Meso-diaminopimelate recognition motif motif is present at residues 402 to 405 (DNPR).

It belongs to the MurCDEF family. MurE subfamily. It depends on Mg(2+) as a cofactor. Post-translationally, carboxylation is probably crucial for Mg(2+) binding and, consequently, for the gamma-phosphate positioning of ATP.

It is found in the cytoplasm. The catalysed reaction is UDP-N-acetyl-alpha-D-muramoyl-L-alanyl-D-glutamate + meso-2,6-diaminopimelate + ATP = UDP-N-acetyl-alpha-D-muramoyl-L-alanyl-gamma-D-glutamyl-meso-2,6-diaminopimelate + ADP + phosphate + H(+). Its pathway is cell wall biogenesis; peptidoglycan biosynthesis. Functionally, catalyzes the addition of meso-diaminopimelic acid to the nucleotide precursor UDP-N-acetylmuramoyl-L-alanyl-D-glutamate (UMAG) in the biosynthesis of bacterial cell-wall peptidoglycan. This Ectopseudomonas mendocina (strain ymp) (Pseudomonas mendocina) protein is UDP-N-acetylmuramoyl-L-alanyl-D-glutamate--2,6-diaminopimelate ligase.